Consider the following 362-residue polypeptide: Porin Omp2b (362 aa).

An N-terminal signal peptide occupies residues 1–22 (MNIKSLLLGSAAALVAASGAQA).

This sequence belongs to the alphaproteobacteria porin family. As to quaternary structure, homotrimer.

The protein localises to the cell outer membrane. In terms of biological role, forms passive diffusion pores that allow small molecular weight hydrophilic materials across the outer membrane. This is Porin Omp2b (omp2b) from Brucella neotomae.